We begin with the raw amino-acid sequence, 178 residues long: Plasmid transfer protein TraF (178 aa).

The N-terminal stretch at 1-30 (MSRILKRIAAGVVIAGVAALLLAAGGYAAG) is a signal peptide.

The protein belongs to the peptidase S26C family.

It localises to the periplasm. In terms of biological role, required for donor-specific phage sensitivity. May be involved in pilus assembly. In Escherichia coli, this protein is Plasmid transfer protein TraF (traF).